Consider the following 94-residue polypeptide: Small ribosomal subunit protein bS18 (94 aa).

It belongs to the bacterial ribosomal protein bS18 family. In terms of assembly, part of the 30S ribosomal subunit. Forms a tight heterodimer with protein bS6.

In terms of biological role, binds as a heterodimer with protein bS6 to the central domain of the 16S rRNA, where it helps stabilize the platform of the 30S subunit. The polypeptide is Small ribosomal subunit protein bS18 (Polaromonas naphthalenivorans (strain CJ2)).